Here is a 213-residue protein sequence, read N- to C-terminus: Kynurenine formamidase (213 aa).

Trp18 contributes to the substrate binding site. Positions 48, 52, and 54 each coordinate Zn(2+). The Proton donor/acceptor role is filled by His58. Zn(2+) is bound by residues His160 and Glu172.

It belongs to the Cyclase 1 superfamily. KynB family. As to quaternary structure, homodimer. Zn(2+) is required as a cofactor.

It catalyses the reaction N-formyl-L-kynurenine + H2O = L-kynurenine + formate + H(+). It functions in the pathway amino-acid degradation; L-tryptophan degradation via kynurenine pathway; L-kynurenine from L-tryptophan: step 2/2. Functionally, catalyzes the hydrolysis of N-formyl-L-kynurenine to L-kynurenine, the second step in the kynurenine pathway of tryptophan degradation. This chain is Kynurenine formamidase, found in Burkholderia lata (strain ATCC 17760 / DSM 23089 / LMG 22485 / NCIMB 9086 / R18194 / 383).